The following is a 1029-amino-acid chain: Probable E3 ubiquitin protein ligase C167.07c (1029 aa).

Residues 46 to 75 (AENNSVAVQSLSRGFLARRKFKQDFRERWI) enclose the IQ domain. The region spanning 692 to 1029 (FGKLLKGPIR…VRSGVGFGFS (338 aa)) is the HECT domain. Cys-997 acts as the Glycyl thioester intermediate in catalysis.

It is found in the cytoplasm. The protein localises to the nucleus. The catalysed reaction is S-ubiquitinyl-[E2 ubiquitin-conjugating enzyme]-L-cysteine + [acceptor protein]-L-lysine = [E2 ubiquitin-conjugating enzyme]-L-cysteine + N(6)-ubiquitinyl-[acceptor protein]-L-lysine.. Functionally, probable E3 ubiquitin-protein ligase which mediates ubiquitination and subsequent proteasomal degradation of target proteins. The polypeptide is Probable E3 ubiquitin protein ligase C167.07c (Schizosaccharomyces pombe (strain 972 / ATCC 24843) (Fission yeast)).